The primary structure comprises 320 residues: Probable L-ascorbate peroxidase 5, chloroplastic (320 aa).

A chloroplast-targeting transit peptide spans 1–42 (MAVVHRILRRGLSAASPLPSLRGLLLVSPQELGRRPASSSSS). The active-site Proton acceptor is the H80. H209 contributes to the heme b binding site. T210 serves as a coordination point for K(+). Residues 213 to 241 (RARPERSGWGKPETKYTENGPGAPGGQSW) form a disordered region. The span at 214-228 (ARPERSGWGKPETKY) shows a compositional bias: basic and acidic residues. Residues T242 and D249 each coordinate K(+).

The protein belongs to the peroxidase family. Ascorbate peroxidase subfamily. Heme b is required as a cofactor. As to expression, expressed in leaves, stems and flowers.

Its subcellular location is the plastid. It is found in the chloroplast stroma. The catalysed reaction is L-ascorbate + H2O2 = L-dehydroascorbate + 2 H2O. Plays a key role in hydrogen peroxide removal. This Oryza sativa subsp. japonica (Rice) protein is Probable L-ascorbate peroxidase 5, chloroplastic.